The sequence spans 229 residues: NAD(P)H-hydrate epimerase (229 aa).

Residues 10-217 (AINVDLELFN…ALQRKYELNL (208 aa)) form the YjeF N-terminal domain. Residue 60 to 64 (NNGGD) participates in (6S)-NADPHX binding. Positions 61 and 125 each coordinate K(+). Residues 129–135 (GFSFKPP) and Asp-158 contribute to the (6S)-NADPHX site. Ser-161 lines the K(+) pocket.

The protein belongs to the NnrE/AIBP family. It depends on K(+) as a cofactor.

It catalyses the reaction (6R)-NADHX = (6S)-NADHX. It carries out the reaction (6R)-NADPHX = (6S)-NADPHX. Functionally, catalyzes the epimerization of the S- and R-forms of NAD(P)HX, a damaged form of NAD(P)H that is a result of enzymatic or heat-dependent hydration. This is a prerequisite for the S-specific NAD(P)H-hydrate dehydratase to allow the repair of both epimers of NAD(P)HX. This Drosophila virilis (Fruit fly) protein is NAD(P)H-hydrate epimerase.